Here is a 208-residue protein sequence, read N- to C-terminus: Small ribosomal subunit protein uS4 (208 aa).

The S4 RNA-binding domain occupies 98–161 (RRLDNVVYRL…RKIPVLAEAQ (64 aa)).

The protein belongs to the universal ribosomal protein uS4 family. In terms of assembly, part of the 30S ribosomal subunit. Contacts protein S5. The interaction surface between S4 and S5 is involved in control of translational fidelity.

In terms of biological role, one of the primary rRNA binding proteins, it binds directly to 16S rRNA where it nucleates assembly of the body of the 30S subunit. Its function is as follows. With S5 and S12 plays an important role in translational accuracy. In Desulfovibrio desulfuricans (strain ATCC 27774 / DSM 6949 / MB), this protein is Small ribosomal subunit protein uS4.